Here is a 290-residue protein sequence, read N- to C-terminus: Membrane-spanning 4-domains subfamily A member 8 (290 aa).

Positions 1-21 (MNRPTAQGAVNLSGSKFSTAK) are enriched in polar residues. The disordered stretch occupies residues 1 to 25 (MNRPTAQGAVNLSGSKFSTAKSWEP). The Cytoplasmic portion of the chain corresponds to 1–108 (MNRPTAQGAV…PAQRVLKKGQ (108 aa)). A helical membrane pass occupies residues 109-129 (VLGAIQILIGLVHIGLGSIMI). Topologically, residues 130–138 (TNLFSHYTP) are extracellular. Residues 139 to 159 (VSLYGGFPFWGGIWFIISGSL) traverse the membrane as a helical segment. Over 160 to 174 (SVAAETQPNSPCLLN) the chain is Cytoplasmic. The chain crosses the membrane as a helical span at residues 175–195 (GSVGLNIFSAICSAVGIMLFI). Topologically, residues 196–220 (TDISISSGYIYPSYYPYQENLGVRT) are extracellular. Residues 221–241 (GVAISSVLLIFCLLELSIASV) traverse the membrane as a helical segment. The Cytoplasmic segment spans residues 242–290 (SSHFGCQVACCHYNNPGVVIPNVYAANPVVIPEPPNPIPSYSEVVQDSR).

It belongs to the MS4A family. Expressed strongly in intestine and colon and minimally in lung and ovary.

It is found in the membrane. May be involved in signal transduction as a component of a multimeric receptor complex. The chain is Membrane-spanning 4-domains subfamily A member 8 (Ms4a8) from Mus musculus (Mouse).